Reading from the N-terminus, the 315-residue chain is L-threo-3-deoxy-hexylosonate aldolase (315 aa).

50–51 (SN) is a substrate binding site. Catalysis depends on Lys174, which acts as the Schiff-base intermediate with substrate.

The protein belongs to the DapA family.

It carries out the reaction 2-dehydro-3-deoxy-L-galactonate = L-glyceraldehyde + pyruvate. Its pathway is carbohydrate acid metabolism. Its function is as follows. Mediates the conversion of 2-dehydro-3-deoxy-L-galactonate to pyruvate and L-glyceraldehyde in D-galacturonate catabolic process. The protein is L-threo-3-deoxy-hexylosonate aldolase (lga1) of Hypocrea jecorina (Trichoderma reesei).